Reading from the N-terminus, the 829-residue chain is Sodium/hydrogen exchanger 3 (829 aa).

The first 26 residues, 1 to 26 (MWHRALGPGWKLLLALALTSLQGARG), serve as a signal peptide directing secretion. Residues 27-46 (AEEEPSSDGSFQVVTFKWHH) lie on the Extracellular side of the membrane. The helical transmembrane segment at 47–69 (VQDPYIIALWILVASLAKIVFHL) threads the bilayer. The Cytoplasmic segment spans residues 70–77 (SHKVTSIV). The chain crosses the membrane as a helical span at residues 78 to 97 (PESALLIVLGLVLGGIVWAA). Topologically, residues 98–106 (DHIASFTLT) are extracellular. Residues 107 to 124 (PTLFFFYLLPPIVLDAGY) form a helical membrane-spanning segment. Residues 125–127 (FMP) lie on the Cytoplasmic side of the membrane. The helical transmembrane segment at 128 to 163 (NRLFFGNLGTILLYAVIGTIWNAATTGLSLYGVFLS) threads the bilayer. A 1,2-diacyl-sn-glycero-3-phospho-(1D-myo-inositol) is bound by residues Gly-133, Gly-136, and Thr-137. At 164-176 (GLMGELKIGLLDF) the chain is on the extracellular side. A helical membrane pass occupies residues 177 to 198 (LLFGSLIAAVDPVAVLAVFEEV). The Cytoplasmic segment spans residues 199 to 200 (HV). A helical transmembrane segment spans residues 201-232 (NEVLFIIVFGESLLNDAVTVVLYNVFESFVTL). At 233–239 (GGDAVTG) the chain is on the extracellular side. Residues 240–274 (VDCVKGIVSFFVVSLGGTLVGVIFAFLLSLVTRFT) traverse the membrane as a helical segment. The Cytoplasmic segment spans residues 275–276 (KH). The helical transmembrane segment at 277–299 (VRIIEPGFVFVISYLSYLTSEML) threads the bilayer. Residues 300–301 (SL) lie on the Extracellular side of the membrane. The helical transmembrane segment at 302–318 (SSILAITFCGICCQKYV) threads the bilayer. Residues 319 to 325 (KANISEQ) lie on the Cytoplasmic side of the membrane. The chain crosses the membrane as a helical span at residues 326 to 354 (SATTVRYTMKMLASGAETIIFMFLGISAV). At 355 to 362 (NPDIWTWN) the chain is on the extracellular side. The helical transmembrane segment at 363–384 (TAFVLLTLVFISVYRAIGVVLQ) threads the bilayer. At 385–397 (TWILNRYRMVQLE) the chain is on the cytoplasmic side. Met-393 contributes to the a 1,2-diacyl-sn-glycero-3-phospho-(1D-myo-inositol) binding site. A helical membrane pass occupies residues 398-421 (TIDQVVMSYGGLRGAVAYALVVLL). Topologically, residues 422-428 (DEKKVKE) are extracellular. Residues 429–462 (KNLFVSTTLIVVFFTVIFQGLTIKPLVQWLKVKR) traverse the membrane as a helical segment. Topologically, residues 463-829 (SEHREPKLNE…QPAAPESTHM (367 aa)) are cytoplasmic. Residues Gln-492, Ile-493, and His-495 each contribute to the a 1,2-diacyl-sn-glycero-3-phospho-(1D-myo-inositol) site. Phosphoserine is present on residues Ser-550 and Ser-558. Residues 571–585 (RPSTVEASVSYFLRE) are interaction with EZR. Residues 586–663 (NVSAVCLDMQ…RKRLESFKSA (78 aa)) form an interaction with NHERF4 region. Residues 587 to 691 (VSAVCLDMQS…AQKRRNSSIP (105 aa)) are interaction with AHCYL1. 2 positions are modified to phosphoserine: Ser-588 and Ser-603. Ser-659 carries the post-translational modification Phosphoserine; by SGK1. A compositionally biased stretch (basic residues) spans 677–687 (YKRERAQKRRN). The tract at residues 677–696 (YKRERAQKRRNSSIPNGKLP) is disordered. Residues Ser-714, Ser-805, and Ser-808 each carry the phosphoserine modification.

The protein belongs to the monovalent cation:proton antiporter 1 (CPA1) transporter (TC 2.A.36) family. Homodimer. Found in the forms of complex and dynamic macromolecular complexes. Binds NHERF1 and NHERF2. Interacts with CHP1; this interaction increases trafficking and activity of SLC9A3 at the plasma membrane. Interacts with CHP2 and SHANK2. Interacts with PDZK1 (via C-terminal PDZ domain). Interacts with NHERF4 and interactions decrease in response to elevated calcium ion levels. Interacts with AHCYL1; the interaction is required for SLC9A3 activity. Interacts with EZR; interaction targets SLC9A3 to the apical membrane. Interacts with SNX27 (via PDZ domains); directs SLC9A3 membrane insertion from early endosomes to the plasma membrane. In terms of processing, phosphorylated by PKA, which inhibits activity. Phosphorylation at Ser-659 by SGK1 is associated with increased abundance at the cell membrane. Phosphorylation at Ser-714 by CSNK2A1 regulates SLC9A3 activity through the formation of multiple signaling complexes.

The protein localises to the apical cell membrane. It localises to the cell membrane. Its subcellular location is the recycling endosome membrane. It is found in the early endosome membrane. It catalyses the reaction Na(+)(in) + H(+)(out) = Na(+)(out) + H(+)(in). Seems to switch between active and inactive modes in response to various stimuli. Activated directly or indirectly by membrane phosphatidylinositol (PIs). Regulated by a variety of auxiliary proteins, which facilitate the maturation, cell surface expression and function of the transporter. Inhibited specifically by the drug tenapanor. Plasma membrane Na(+)/H(+) antiporter. Exchanges intracellular H(+) ions for extracellular Na(+) in 1:1 stoichiometry, playing a key role in salt and fluid absorption and pH homeostasis. Major apical Na(+)/H(+) exchanger in kidney and intestine playing an important role in renal and intestine Na(+) absorption and blood pressure regulation. The protein is Sodium/hydrogen exchanger 3 of Mus musculus (Mouse).